A 440-amino-acid polypeptide reads, in one-letter code: Transposon Ty1-GR2 Gag polyprotein (440 aa).

Positions 1–16 (MESQQLSQHSHISHGS) are enriched in low complexity. Disordered regions lie at residues 1–93 (MESQ…MMTQ), 126–173 (PQSQ…RPPP), and 352–440 (GSRN…PGTY). Polar residues-rich tracts occupy residues 48–60 (TKAN…TPAS) and 127–152 (QSQF…GNTF). Positions 153-165 (TDSSSADSDMTST) are enriched in low complexity. The interval 299–401 (NNGIHINNKV…NSKSKTARAH (103 aa)) is RNA-binding. Positions 402–418 (NVSTSNNSPSTDNDSIS) are enriched in low complexity. Position 416 is a phosphoserine (Ser-416). Residues 419–428 (KSTTEPIQLN) show a composition bias toward polar residues. Basic and acidic residues predominate over residues 429 to 440 (NKHDLHLRPGTY).

In terms of assembly, homotrimer.

The protein localises to the cytoplasm. Capsid protein (CA) is the structural component of the virus-like particle (VLP), forming the shell that encapsulates the retrotransposons dimeric RNA genome. The particles are assembled from trimer-clustered units and there are holes in the capsid shells that allow for the diffusion of macromolecules. CA also has nucleocapsid-like chaperone activity, promoting primer tRNA(i)-Met annealing to the multipartite primer-binding site (PBS), dimerization of Ty1 RNA and initiation of reverse transcription. This is Transposon Ty1-GR2 Gag polyprotein (TY1A-GR2) from Saccharomyces cerevisiae (strain ATCC 204508 / S288c) (Baker's yeast).